A 161-amino-acid polypeptide reads, in one-letter code: Dihydrofolate reductase (161 aa).

In terms of domain architecture, DHFR spans 2–161 (NISLIAAISK…YNYSFEILSR (160 aa)). Position 6–8 (6–8 (IAA)) interacts with substrate. Residues 7 to 8 (AA) and 15 to 20 (IGYKNK) contribute to the NADP(+) site. Residue Asp-28 participates in substrate binding. 44–47 (GRLT) is an NADP(+) binding site. Arg-59 is a binding site for substrate. NADP(+) contacts are provided by residues 64–66 (ISS) and 96–101 (IGGAKI). Thr-115 provides a ligand contact to substrate.

Belongs to the dihydrofolate reductase family.

It carries out the reaction (6S)-5,6,7,8-tetrahydrofolate + NADP(+) = 7,8-dihydrofolate + NADPH + H(+). It participates in cofactor biosynthesis; tetrahydrofolate biosynthesis; 5,6,7,8-tetrahydrofolate from 7,8-dihydrofolate: step 1/1. In terms of biological role, key enzyme in folate metabolism. Catalyzes an essential reaction for de novo glycine and purine synthesis, and for DNA precursor synthesis. This is Dihydrofolate reductase (folA) from Buchnera aphidicola subsp. Acyrthosiphon pisum (strain APS) (Acyrthosiphon pisum symbiotic bacterium).